Here is a 410-residue protein sequence, read N- to C-terminus: Argininosuccinate synthase (410 aa).

6 to 14 (AYSGGLDTS) provides a ligand contact to ATP. L-citrulline is bound at residue Tyr84. Residue Gly114 coordinates ATP. 3 residues coordinate L-aspartate: Thr116, Asn120, and Asp121. Asn120 is an L-citrulline binding site. L-citrulline is bound by residues Arg124, Ser169, Ser178, Glu254, and Tyr266.

The protein belongs to the argininosuccinate synthase family. Type 1 subfamily. As to quaternary structure, homotetramer.

Its subcellular location is the cytoplasm. The catalysed reaction is L-citrulline + L-aspartate + ATP = 2-(N(omega)-L-arginino)succinate + AMP + diphosphate + H(+). Its pathway is amino-acid biosynthesis; L-arginine biosynthesis; L-arginine from L-ornithine and carbamoyl phosphate: step 2/3. This Pyrococcus furiosus (strain ATCC 43587 / DSM 3638 / JCM 8422 / Vc1) protein is Argininosuccinate synthase.